The sequence spans 716 residues: Translation initiation factor IF-2 (716 aa).

The segment at 53–135 (GGAGVTSQKP…PLKPKKELPE (83 aa)) is disordered. Residues 57-83 (VTSQKPAETNKNKPQGINQQPAGNQPN) are compositionally biased toward polar residues. Positions 93 to 109 (VQNNQFNKNKKNNNNNK) are enriched in low complexity. The tr-type G domain occupies 217–386 (IRPPVVTIMG…LLVSEVEELK (170 aa)). The tract at residues 226–233 (GHVDHGKT) is G1. 226 to 233 (GHVDHGKT) serves as a coordination point for GTP. The segment at 251 to 255 (GITQH) is G2. The tract at residues 272–275 (DTPG) is G3. Residues 272–276 (DTPGH) and 326–329 (NKVD) each bind GTP. The tract at residues 326–329 (NKVD) is G4. The segment at 362–364 (SAL) is G5.

Belongs to the TRAFAC class translation factor GTPase superfamily. Classic translation factor GTPase family. IF-2 subfamily.

Its subcellular location is the cytoplasm. In terms of biological role, one of the essential components for the initiation of protein synthesis. Protects formylmethionyl-tRNA from spontaneous hydrolysis and promotes its binding to the 30S ribosomal subunits. Also involved in the hydrolysis of GTP during the formation of the 70S ribosomal complex. This chain is Translation initiation factor IF-2, found in Bacillus velezensis (strain DSM 23117 / BGSC 10A6 / LMG 26770 / FZB42) (Bacillus amyloliquefaciens subsp. plantarum).